The following is a 473-amino-acid chain: Monocarboxylate transporter 4 (473 aa).

Residues 1 to 17 (MGAVVVDDGPSGVKAPD) lie on the Cytoplasmic side of the membrane. Residues 18–38 (GGWGWAVLFGCFIITGFSYAF) form a helical membrane-spanning segment. Topologically, residues 39 to 61 (PKAVSVFFKELIREFGVGYSDTA) are extracellular. The chain crosses the membrane as a helical span at residues 62–82 (WISSILLAMLYGTGPLCSVCV). Residues 83–91 (NRFGCRPVM) are Cytoplasmic-facing. Residues 92–112 (LVGGLFASMGMVIASFCTSIV) form a helical membrane-spanning segment. Over 113–115 (QIY) the chain is Extracellular. Residues 116-136 (LTAGVITGLGLALNFQPSLIM) traverse the membrane as a helical segment. Residues 137 to 149 (LNRYFDKRRPLAN) are Cytoplasmic-facing. A helical transmembrane segment spans residues 150–170 (GLSAAGSPVFLCALSPLGQIL). Residues 171-179 (QHEYGWRGG) lie on the Extracellular side of the membrane. The chain crosses the membrane as a helical span at residues 180–200 (FLILGGMLLNCCVCGALMRPL). Residues 201-231 (EPPKKSEATKEPAEKKAKKKLLDFSVFKDGG) are Cytoplasmic-facing. A helical transmembrane segment spans residues 232–252 (FVIYTLAASIMVLGLFVPPVF). Residues 253–268 (VVSYAKDLGYQDTKAA) are Extracellular-facing. A helical transmembrane segment spans residues 269–289 (FLLTILGFIDIFARPICGMVA). At 290 to 297 (GLKWVRPR) the chain is on the cytoplasmic side. The helical transmembrane segment at 298–318 (CVYLFSFAMIFNGFTDLMGSM) threads the bilayer. Over 319–321 (SVD) the chain is Extracellular. A helical membrane pass occupies residues 322-342 (YGGLVVFCIFFGISYGMVGAL). Residues 343-358 (QFEVLMAIVGTQKFSS) are Cytoplasmic-facing. Residues 359 to 379 (AIGLVLLAEAMAVLIGPPSAG) traverse the membrane as a helical segment. The Extracellular portion of the chain corresponds to 380–388 (KLLDLTRRY). A helical membrane pass occupies residues 389 to 409 (MFVFIIAGIEVTTSALVLALG). Topologically, residues 410 to 473 (NFFCIKKKPA…EVVTNPETCV (64 aa)) are cytoplasmic. The segment at 421–447 (PHTKEAAAEREELNKSEDKTPEDAKVD) is disordered. Basolateral sorting signal stretches follow at residues 427–449 (AAER…VDSI) and 449–473 (IEVE…ETCV).

This sequence belongs to the major facilitator superfamily. Monocarboxylate porter (TC 2.A.1.13) family. As to quaternary structure, interacts with BSG; interaction mediates SLC16A3 targeting to the plasma membrane.

The protein resides in the cell membrane. Its subcellular location is the basolateral cell membrane. The catalysed reaction is (S)-lactate(in) + H(+)(in) = (S)-lactate(out) + H(+)(out). The enzyme catalyses pyruvate(out) + H(+)(out) = pyruvate(in) + H(+)(in). Proton-dependent transporter of monocarboxylates such as L-lactate and pyruvate. Plays a predominant role in the L-lactate efflux from highly glycolytic cells. The polypeptide is Monocarboxylate transporter 4 (SLC16A3) (Gallus gallus (Chicken)).